Here is a 385-residue protein sequence, read N- to C-terminus: Polyketide synthase 4 (385 aa).

Cys157 is a catalytic residue.

The protein belongs to the thiolase-like superfamily. Chalcone/stilbene synthases family. As to expression, expressed in glandular trichomes.

The protein resides in the cytoplasm. Its function is as follows. Polyketide synthase responsible for the biosynthesis of secondary metabolites. In Cannabis sativa (Hemp), this protein is Polyketide synthase 4 (PKSG4).